Here is a 1018-residue protein sequence, read N- to C-terminus: Unconventional myosin-Ig (1018 aa).

Met1 is subject to N-acetylmethionine. A Myosin motor domain is found at 9–707 (YGKPDFVLLD…TLVTLEQSRA (699 aa)). 102 to 109 (GESGAGKT) serves as a coordination point for ATP. The segment at 584 to 606 (MVALVENLASKEPFYVRCIKPNE) is actin-binding. The region spanning 710-739 (IPIIVLLLQKAWRGTLARWRCRRLRAIYTI) is the IQ domain. In terms of domain architecture, TH1 spans 824 to 1017 (GLRQDWGCRR…RGSFTLLWPS (194 aa)).

The protein belongs to the TRAFAC class myosin-kinesin ATPase superfamily. Myosin family. Interacts with calmodulin; via its IQ motifs. In terms of tissue distribution, specifically expressed in hematopoietic cells.

It is found in the cell membrane. It localises to the cell projection. Its subcellular location is the phagocytic cup. Unconventional myosin required during immune response for detection of rare antigen-presenting cells by regulating T-cell migration. Unconventional myosins are actin-based motor molecules with ATPase activity and serve in intracellular movements. Acts as a regulator of T-cell migration by generating membrane tension, enforcing cell-intrinsic meandering search, thereby enhancing detection of rare antigens during lymph-node surveillance, enabling pathogen eradication. Also required in B-cells, where it regulates different membrane/cytoskeleton-dependent processes. Involved in Fc-gamma receptor (Fc-gamma-R) phagocytosis. Functionally, constitutes the minor histocompatibility antigen HA-2. More generally, minor histocompatibility antigens (mHags) refer to immunogenic peptide which, when complexed with MHC, can generate an immune response after recognition by specific T-cells. The peptides are derived from polymorphic intracellular proteins, which are cleaved by normal pathways of antigen processing. The binding of these peptides to MHC class I or class II molecules and their expression on the cell surface can stimulate T-cell responses and thereby trigger graft rejection or graft-versus-host disease (GVHD) after hematopoietic stem cell transplantation from HLA-identical sibling donor. GVHD is a frequent complication after bone marrow transplantation (BMT), due to mismatch of minor histocompatibility antigen in HLA-matched sibling marrow transplants. HA-2 is restricted to MHC class I HLA-A*0201. The polypeptide is Unconventional myosin-Ig (MYO1G) (Homo sapiens (Human)).